The chain runs to 88 residues: Small ribosomal subunit protein bS16c (88 aa).

Belongs to the bacterial ribosomal protein bS16 family.

Its subcellular location is the plastid. It localises to the chloroplast. The sequence is that of Small ribosomal subunit protein bS16c from Coffea arabica (Arabian coffee).